We begin with the raw amino-acid sequence, 213 residues long: Glutamine amidotransferase-like class 1 domain-containing protein 1 (213 aa).

The N-terminal stretch at 1 to 20 is a signal peptide; that stretch reads MTSKPTCLIVASAASAGVSA.

This sequence belongs to the peptidase C56 family. In terms of assembly, homotetramer. Component of the FERRY complex.

Its subcellular location is the secreted. The protein resides in the early endosome. In terms of biological role, component of the FERRY complex (Five-subunit Endosomal Rab5 and RNA/ribosome intermediary). The FERRY complex directly interacts with mRNAs and RAB5A, and functions as a RAB5A effector involved in the localization and the distribution of specific mRNAs most likely by mediating their endosomal transport. The complex recruits mRNAs and ribosomes to early endosomes through direct mRNA-interaction. The chain is Glutamine amidotransferase-like class 1 domain-containing protein 1 from Danio rerio (Zebrafish).